The chain runs to 341 residues: Ribosomal RNA small subunit methyltransferase H (341 aa).

S-adenosyl-L-methionine-binding positions include 47-49, D64, F91, D109, and Q116; that span reads GGY. A disordered region spans residues 292-318; sequence VAASEDEASRNPRARSAKLRAGVRTPA.

The protein belongs to the methyltransferase superfamily. RsmH family.

The protein localises to the cytoplasm. The enzyme catalyses cytidine(1402) in 16S rRNA + S-adenosyl-L-methionine = N(4)-methylcytidine(1402) in 16S rRNA + S-adenosyl-L-homocysteine + H(+). Its function is as follows. Specifically methylates the N4 position of cytidine in position 1402 (C1402) of 16S rRNA. The chain is Ribosomal RNA small subunit methyltransferase H from Sinorhizobium fredii (strain NBRC 101917 / NGR234).